The sequence spans 603 residues: Baeyer-Villiger monooxygenase (603 aa).

FAD is bound by residues Glu94, 102–105, Asp114, Tyr120, and Val164; that span reads TWYW. An NADP(+)-binding site is contributed by 112 to 114; it reads HCD. NADP(+) is bound by residues 248–254, 271–272, and 386–387; these read TGATGVQ, RT, and KR.

The protein belongs to the FAD-binding monooxygenase family. FAD is required as a cofactor.

In terms of biological role, catalyzes a Baeyer-Villiger oxidation reaction, i.e. the insertion of an oxygen atom into a carbon-carbon bond adjacent to a carbonyl, which converts ketones to esters or lactones using NADPH and/or NADH as an electron donor. Thus, can convert bicyclo[3.2.0]hept-2-en-6-one into the oxidative lactone products 2-oxabicyclo[3.3.0]oct-6-en-3-one and 3-oxabicyclo[3.3.0]oct-6-en-2-one. Is also able to catalyze the sulfoxidation of methyl phenyl sulfide (thioanisole). In Streptomyces coelicolor (strain ATCC BAA-471 / A3(2) / M145), this protein is Baeyer-Villiger monooxygenase.